A 108-amino-acid chain; its full sequence is MNISSLRKAFIFMGAVAALSLVNAQSALAANESAKDMTCQEFIDLNPKAMTPVAWWMLHEETVYKGGDTVTLNETDLTQIPKVIEYCKKNPQKNLYTFKNQASNDLPN.

An N-terminal signal peptide occupies residues 1–29 (MNISSLRKAFIFMGAVAALSLVNAQSALA). At K93 the chain carries N6-acetyllysine.

This sequence belongs to the HdeB family.

The protein resides in the periplasm. Functionally, required for optimal acid stress protection, which is important for survival of enteric bacteria in the acidic environment of the host stomach. Exhibits a chaperone-like activity at acidic pH by preventing the aggregation of many different periplasmic proteins. This is Acid stress chaperone HdeB from Escherichia coli O6:H1 (strain CFT073 / ATCC 700928 / UPEC).